Here is a 125-residue protein sequence, read N- to C-terminus: MARIASVNIPDNKRLVVSLTYIYGLGPAMAAEICNKAKISKDKKVKELTDQELISLRNIIESEYKVEGDLRREVTLNIKKKKDIRCYQGLRHIRKLPVRGQNTHSNARTRKGKAIAIAGKKKAVK.

The protein belongs to the universal ribosomal protein uS13 family. As to quaternary structure, part of the 30S ribosomal subunit. Forms a loose heterodimer with protein S19. Forms two bridges to the 50S subunit in the 70S ribosome.

Located at the top of the head of the 30S subunit, it contacts several helices of the 16S rRNA. In the 70S ribosome it contacts the 23S rRNA (bridge B1a) and protein L5 of the 50S subunit (bridge B1b), connecting the 2 subunits; these bridges are implicated in subunit movement. Contacts the tRNAs in the A and P-sites. This chain is Small ribosomal subunit protein uS13, found in Rickettsia felis (strain ATCC VR-1525 / URRWXCal2) (Rickettsia azadi).